The following is a 123-amino-acid chain: Small ribosomal subunit protein uS12 (123 aa).

Asp89 is modified (3-methylthioaspartic acid). Residues 104-123 form a disordered region; the sequence is TQGVKDRRQRRSKYGAKRPK. Residues 110–123 show a composition bias toward basic residues; that stretch reads RRQRRSKYGAKRPK.

Belongs to the universal ribosomal protein uS12 family. Part of the 30S ribosomal subunit. Contacts proteins S8 and S17. May interact with IF1 in the 30S initiation complex.

With S4 and S5 plays an important role in translational accuracy. In terms of biological role, interacts with and stabilizes bases of the 16S rRNA that are involved in tRNA selection in the A site and with the mRNA backbone. Located at the interface of the 30S and 50S subunits, it traverses the body of the 30S subunit contacting proteins on the other side and probably holding the rRNA structure together. The combined cluster of proteins S8, S12 and S17 appears to hold together the shoulder and platform of the 30S subunit. The sequence is that of Small ribosomal subunit protein uS12 from Rhodospirillum rubrum (strain ATCC 11170 / ATH 1.1.1 / DSM 467 / LMG 4362 / NCIMB 8255 / S1).